A 395-amino-acid polypeptide reads, in one-letter code: Acetate kinase (395 aa).

Position 8 (N8) interacts with Mg(2+). K15 serves as a coordination point for ATP. Residue R89 coordinates substrate. D146 acts as the Proton donor/acceptor in catalysis. Residues 206 to 210 (HLGNG), 281 to 283 (DLR), and 329 to 333 (GIGEN) contribute to the ATP site. Mg(2+) is bound at residue E382.

The protein belongs to the acetokinase family. Homodimer. It depends on Mg(2+) as a cofactor. Mn(2+) serves as cofactor.

It localises to the cytoplasm. The enzyme catalyses acetate + ATP = acetyl phosphate + ADP. Its pathway is metabolic intermediate biosynthesis; acetyl-CoA biosynthesis; acetyl-CoA from acetate: step 1/2. Its function is as follows. Catalyzes the formation of acetyl phosphate from acetate and ATP. Can also catalyze the reverse reaction. The protein is Acetate kinase of Shouchella clausii (strain KSM-K16) (Alkalihalobacillus clausii).